Consider the following 507-residue polypeptide: MNSFPWLTIIVVFPILTGSLIFLLPHRGNKVMKWYTLCICILELLLTTYTFCYHFQLDDPLTQLTENYKWIHFFDFYWRLGIDGLSIGPILLTGFITTLATLAAWPVTRDAQLFHFLMLAMYSGQIGSFSSRDLLLFFLMWEFELIPVYLLLSMWGGKKRLYSATKFILYTAGGSIFLLIGVLGIGLYGSNEPTLNFETLANQSYPVALEVIFYVGFLIAFAVKLPIIPFHTWLPDTHGEAHYSTCMLLAGILLKMGAYGLVRINMELLPHAHCLFSPGLIIVGAIQIIYAASTSPGQLNLKKRIAYSSISHMGFIIIGIGSLSDTGLNGAILQIISHGFIGAALFFLAGTSYDRIRLLYLDEMGGMAIPLPKLFTMLSILSMASLALPGLSGFVAELLVFFGIITSQKYLLMPKILIAFLMAIGMILTPIYSLSMLRQMFYGYKLFNVPNYYFFDSGPRELFVSISLLLPIIGIGIYPDFVLSLSVEKVEAIISHFFFSIVFKKKE.

Helical transmembrane passes span 4–24, 37–57, 87–107, 111–131, 134–154, 167–187, 208–228, 242–262, 272–292, 305–325, 330–350, 386–406, 416–436, 462–482, and 483–503; these read FPWLTIIVVFPILTGSLIFLL, LCICILELLLTTYTFCYHFQL, IGPILLTGFITTLATLAAWPV, AQLFHFLMLAMYSGQIGSFSS, LLLFFLMWEFELIPVYLLLSM, FILYTAGGSIFLLIGVLGIGL, ALEVIFYVGFLIAFAVKLPII, HYSTCMLLAGILLKMGAYGLV, AHCLFSPGLIIVGAIQIIYAA, IAYSSISHMGFIIIGIGSLSD, GAILQIISHGFIGAALFFLAG, LALPGLSGFVAELLVFFGIIT, ILIAFLMAIGMILTPIYSLSM, LFVSISLLLPIIGIGIYPDFV, and LSLSVEKVEAIISHFFFSIVF.

This sequence belongs to the complex I subunit 4 family.

The protein resides in the plastid. Its subcellular location is the chloroplast thylakoid membrane. It catalyses the reaction a plastoquinone + NADH + (n+1) H(+)(in) = a plastoquinol + NAD(+) + n H(+)(out). It carries out the reaction a plastoquinone + NADPH + (n+1) H(+)(in) = a plastoquinol + NADP(+) + n H(+)(out). The polypeptide is NAD(P)H-quinone oxidoreductase chain 4, chloroplastic (ndhD) (Oenothera elata subsp. hookeri (Hooker's evening primrose)).